A 148-amino-acid chain; its full sequence is Cytochrome c-type biogenesis protein CcmE (148 aa).

At 1–7 (MTRKQRR) the chain is on the cytoplasmic side. A helical; Signal-anchor for type II membrane protein transmembrane segment spans residues 8-28 (LYFVLLGMAALGGAVALVLTA). The Periplasmic portion of the chain corresponds to 29-148 (ISDSLVYFYS…QWNDGKQPKQ (120 aa)). Heme is bound by residues H121 and Y125.

It belongs to the CcmE/CycJ family.

It localises to the cell inner membrane. Functionally, heme chaperone required for the biogenesis of c-type cytochromes. Transiently binds heme delivered by CcmC and transfers the heme to apo-cytochromes in a process facilitated by CcmF and CcmH. This Paramagnetospirillum magneticum (strain ATCC 700264 / AMB-1) (Magnetospirillum magneticum) protein is Cytochrome c-type biogenesis protein CcmE.